Consider the following 510-residue polypeptide: Cytochrome P450 705A20 (510 aa).

Residues 7-27 (QHCFSFILLCFFSLLCYSLLF) form a helical membrane-spanning segment.

The protein belongs to the cytochrome P450 family. Heme serves as cofactor.

The protein localises to the membrane. The sequence is that of Cytochrome P450 705A20 (CYP705A20) from Arabidopsis thaliana (Mouse-ear cress).